Here is a 447-residue protein sequence, read N- to C-terminus: N-succinylarginine dihydrolase (447 aa).

Residues 19–28 (AGLSFGNEAS), Asn-110, and 137–138 (HR) each bind substrate. Glu-174 is an active-site residue. Arg-212 contributes to the substrate binding site. The active site involves His-248. 2 residues coordinate substrate: Asp-250 and Asn-359. Cys-365 (nucleophile) is an active-site residue.

The protein belongs to the succinylarginine dihydrolase family. As to quaternary structure, homodimer.

The catalysed reaction is N(2)-succinyl-L-arginine + 2 H2O + 2 H(+) = N(2)-succinyl-L-ornithine + 2 NH4(+) + CO2. Its pathway is amino-acid degradation; L-arginine degradation via AST pathway; L-glutamate and succinate from L-arginine: step 2/5. In terms of biological role, catalyzes the hydrolysis of N(2)-succinylarginine into N(2)-succinylornithine, ammonia and CO(2). The sequence is that of N-succinylarginine dihydrolase from Salmonella paratyphi B (strain ATCC BAA-1250 / SPB7).